Reading from the N-terminus, the 471-residue chain is MTKVRVRGIYATALTKIMLEDGYDIVQATDTILSRFNILHSTEPPDVTIKDDENIPGALFIIGKCSEVNKVLESILRRVGDVAYNKPPVPLYSVIMGVVADNGHIEVAPGVLALLEGSNYFRPGDKLPVTMVNVTGQLRASPYIMPTTSYLRVIDSPTVRLSRHIKDPDAKMMLVRVGLSKINQLGGLGIRWRSSAQYLSEEDAEKALDEAISLVNAIRVKIAEARDYDMLFEGECIVSVILDAEARWVLDDIRNTIVPTVKGHHALKITMKNTEILDYTEYLVGELKMRDELGRALANYALSNLSTINVHHVKVNGEHINLGPGERVHYSNGLLIIRRELKPGGTLDGLNVAKEYGDAAYSVINIGERHLTHIYVSHDGSFKGAYVNINTPIEVTWDGVIYIDLEVDLTVDKGFNVNIIDEDKLSSIPSRRLINEAEEELSRLKGDVVNLVRNHIDTLSKLGLSIHYQGP.

This sequence belongs to the FAU-1 family.

Its function is as follows. Probable RNase involved in rRNA stability through maturation and/or degradation of precursor rRNAs. Binds to RNA in loop regions with AU-rich sequences. The polypeptide is Probable ribonuclease FAU-1 (Caldivirga maquilingensis (strain ATCC 700844 / DSM 13496 / JCM 10307 / IC-167)).